A 39-amino-acid polypeptide reads, in one-letter code: Natriuretic peptide NsNP-b (39 aa).

Positions 1-8 (SGSKTAKI) are excised as a propeptide. Cys12 and Cys28 are oxidised to a cystine. The disordered stretch occupies residues 19–39 (RIGSTSGMGCGSVPKPTPGGS).

Belongs to the natriuretic peptide family. In terms of tissue distribution, expressed by the venom gland.

Its subcellular location is the secreted. In terms of biological role, snake venom natriuretic peptide that targets both NPR1 and NPR2. Exhibits hypotensive and vasodepressor activities. The polypeptide is Natriuretic peptide NsNP-b (Notechis scutatus scutatus (Mainland tiger snake)).